The following is a 220-amino-acid chain: Cytidylate kinase (220 aa).

9–17 (GPAASGKST) is a binding site for ATP.

Belongs to the cytidylate kinase family. Type 1 subfamily.

The protein resides in the cytoplasm. The catalysed reaction is CMP + ATP = CDP + ADP. It carries out the reaction dCMP + ATP = dCDP + ADP. The polypeptide is Cytidylate kinase (Thermotoga neapolitana (strain ATCC 49049 / DSM 4359 / NBRC 107923 / NS-E)).